The primary structure comprises 192 residues: Probable apo-citrate lyase phosphoribosyl-dephospho-CoA transferase (192 aa).

Belongs to the CitX family.

The catalysed reaction is apo-[citrate lyase ACP] + 2'-(5''-triphospho-alpha-D-ribosyl)-3'-dephospho-CoA = holo-[citrate lyase ACP] + diphosphate. In terms of biological role, transfers 2-(5''-triphosphoribosyl)-3'-dephosphocoenzyme-A on a serine residue to the apo-acyl carrier protein (gamma chain) of the citrate lyase to yield holo-acyl carrier protein. The chain is Probable apo-citrate lyase phosphoribosyl-dephospho-CoA transferase from Streptococcus pyogenes serotype M18 (strain MGAS8232).